We begin with the raw amino-acid sequence, 248 residues long: tRNA (guanine-N(1)-)-methyltransferase (248 aa).

S-adenosyl-L-methionine is bound by residues Gly117 and 137-142 (IGDFVL).

It belongs to the RNA methyltransferase TrmD family. In terms of assembly, homodimer.

It localises to the cytoplasm. The catalysed reaction is guanosine(37) in tRNA + S-adenosyl-L-methionine = N(1)-methylguanosine(37) in tRNA + S-adenosyl-L-homocysteine + H(+). Functionally, specifically methylates guanosine-37 in various tRNAs. This chain is tRNA (guanine-N(1)-)-methyltransferase, found in Polynucleobacter asymbioticus (strain DSM 18221 / CIP 109841 / QLW-P1DMWA-1) (Polynucleobacter necessarius subsp. asymbioticus).